A 598-amino-acid polypeptide reads, in one-letter code: Elongation factor 4 (598 aa).

In terms of domain architecture, tr-type G spans 5 to 187; it reads ANIRNFSIIA…ALVEFIPAPT (183 aa). Residues 17-22 and 134-137 each bind GTP; these read DHGKST and NKID.

It belongs to the TRAFAC class translation factor GTPase superfamily. Classic translation factor GTPase family. LepA subfamily.

It is found in the cell inner membrane. The catalysed reaction is GTP + H2O = GDP + phosphate + H(+). Its function is as follows. Required for accurate and efficient protein synthesis under certain stress conditions. May act as a fidelity factor of the translation reaction, by catalyzing a one-codon backward translocation of tRNAs on improperly translocated ribosomes. Back-translocation proceeds from a post-translocation (POST) complex to a pre-translocation (PRE) complex, thus giving elongation factor G a second chance to translocate the tRNAs correctly. Binds to ribosomes in a GTP-dependent manner. The sequence is that of Elongation factor 4 from Psychrobacter arcticus (strain DSM 17307 / VKM B-2377 / 273-4).